We begin with the raw amino-acid sequence, 243 residues long: Pyridoxine 5'-phosphate synthase (243 aa).

Position 9 (asparagine 9) interacts with 3-amino-2-oxopropyl phosphate. Position 11-12 (11-12) interacts with 1-deoxy-D-xylulose 5-phosphate; that stretch reads DH. A 3-amino-2-oxopropyl phosphate-binding site is contributed by arginine 20. Histidine 45 serves as the catalytic Proton acceptor. Residues arginine 47 and histidine 52 each contribute to the 1-deoxy-D-xylulose 5-phosphate site. Residue glutamate 72 is the Proton acceptor of the active site. Threonine 102 contributes to the 1-deoxy-D-xylulose 5-phosphate binding site. Histidine 193 acts as the Proton donor in catalysis. 3-amino-2-oxopropyl phosphate is bound by residues glycine 194 and 215–216; that span reads GH.

This sequence belongs to the PNP synthase family. Homooctamer; tetramer of dimers.

It localises to the cytoplasm. The enzyme catalyses 3-amino-2-oxopropyl phosphate + 1-deoxy-D-xylulose 5-phosphate = pyridoxine 5'-phosphate + phosphate + 2 H2O + H(+). It participates in cofactor biosynthesis; pyridoxine 5'-phosphate biosynthesis; pyridoxine 5'-phosphate from D-erythrose 4-phosphate: step 5/5. Its function is as follows. Catalyzes the complicated ring closure reaction between the two acyclic compounds 1-deoxy-D-xylulose-5-phosphate (DXP) and 3-amino-2-oxopropyl phosphate (1-amino-acetone-3-phosphate or AAP) to form pyridoxine 5'-phosphate (PNP) and inorganic phosphate. The chain is Pyridoxine 5'-phosphate synthase from Photobacterium profundum (strain SS9).